Here is a 443-residue protein sequence, read N- to C-terminus: L-ornithine N(5)-monooxygenase (443 aa).

FAD-binding positions include 45 to 53 (DKQGDYRWH) and Gln64. Substrate is bound at residue Lys69. FAD is bound at residue Val130. NADP(+) is bound by residues 215 to 218 (GGQS) and Arg240. Substrate-binding positions include 254–257 (NEVF) and Asn284. 284 to 286 (NYS) is a binding site for NADP(+). 407 to 409 (TLL) serves as a coordination point for FAD. A substrate-binding site is contributed by Ser410.

The protein belongs to the lysine N(6)-hydroxylase/L-ornithine N(5)-oxygenase family. As to quaternary structure, homotetramer. It depends on FAD as a cofactor.

It is found in the cell inner membrane. The enzyme catalyses L-ornithine + NADPH + O2 = N(5)-hydroxy-L-ornithine + NADP(+) + H2O. The protein operates within siderophore biosynthesis; pyoverdin biosynthesis. Catalyzes the conversion of L-ornithine to N(5)-hydroxyornithine, the first step in the biosynthesis of all hydroxamate-containing siderophores, such as pyoverdin. Pyoverdin is a hydroxamate siderophore composed of a 6,7-dihydroxyquinoline-containing fluorescent chromophore joined to the N-terminus of a partly cyclic octapeptide (D-Ser-L-Arg-D-Ser-L-N(5)-OH-Orn-L-Lys-L-N(5)-OH-Orn-L-Thr-L-Thr in strain PAO1). Specific for NADPH, which plays a role in stabilization of the C4a-hydroperoxyflavin intermediate. The sequence is that of L-ornithine N(5)-monooxygenase from Pseudomonas aeruginosa (strain ATCC 15692 / DSM 22644 / CIP 104116 / JCM 14847 / LMG 12228 / 1C / PRS 101 / PAO1).